The following is a 305-amino-acid chain: Oxygen-dependent coproporphyrinogen-III oxidase (305 aa).

Ser-97 provides a ligand contact to substrate. Residues His-101 and His-111 each contribute to the a divalent metal cation site. The active-site Proton donor is His-111. Residue 113 to 115 (NVR) coordinates substrate. 2 residues coordinate a divalent metal cation: His-150 and His-180. The segment at 245-280 (YVEFNLVWDRGTHFGLQSGGRTESILLSMPPLASWA) is important for dimerization. 263-265 (GGR) serves as a coordination point for substrate.

This sequence belongs to the aerobic coproporphyrinogen-III oxidase family. In terms of assembly, homodimer. A divalent metal cation serves as cofactor.

It localises to the cytoplasm. It catalyses the reaction coproporphyrinogen III + O2 + 2 H(+) = protoporphyrinogen IX + 2 CO2 + 2 H2O. The protein operates within porphyrin-containing compound metabolism; protoporphyrin-IX biosynthesis; protoporphyrinogen-IX from coproporphyrinogen-III (O2 route): step 1/1. Functionally, involved in the heme biosynthesis. Catalyzes the aerobic oxidative decarboxylation of propionate groups of rings A and B of coproporphyrinogen-III to yield the vinyl groups in protoporphyrinogen-IX. The polypeptide is Oxygen-dependent coproporphyrinogen-III oxidase (Variovorax paradoxus (strain S110)).